We begin with the raw amino-acid sequence, 213 residues long: Ras-like protein rasX (213 aa).

16–23 contacts GTP; it reads GDGGVGKT. The Effector region signature appears at 38–46; the sequence is YDPTIEDSY. Residues 63–67 and 122–125 each bind GTP; these read DTAGQ and NKSD. The residue at position 210 (Cys-210) is a Cysteine methyl ester. Cys-210 carries the S-geranylgeranyl cysteine lipid modification. Residues 211-213 constitute a propeptide, removed in mature form; the sequence is KMM.

It belongs to the small GTPase superfamily. Ras family.

It is found in the cell membrane. It carries out the reaction GTP + H2O = GDP + phosphate + H(+). Ras proteins bind GDP/GTP and possess intrinsic GTPase activity. This is Ras-like protein rasX (rasX) from Dictyostelium discoideum (Social amoeba).